We begin with the raw amino-acid sequence, 306 residues long: UDP-3-O-acyl-N-acetylglucosamine deacetylase (306 aa).

Zn(2+)-binding residues include His-79, His-238, and Asp-242. The Proton donor role is filled by His-265.

This sequence belongs to the LpxC family. The cofactor is Zn(2+).

It carries out the reaction a UDP-3-O-[(3R)-3-hydroxyacyl]-N-acetyl-alpha-D-glucosamine + H2O = a UDP-3-O-[(3R)-3-hydroxyacyl]-alpha-D-glucosamine + acetate. It participates in glycolipid biosynthesis; lipid IV(A) biosynthesis; lipid IV(A) from (3R)-3-hydroxytetradecanoyl-[acyl-carrier-protein] and UDP-N-acetyl-alpha-D-glucosamine: step 2/6. Functionally, catalyzes the hydrolysis of UDP-3-O-myristoyl-N-acetylglucosamine to form UDP-3-O-myristoylglucosamine and acetate, the committed step in lipid A biosynthesis. In Shewanella baltica (strain OS223), this protein is UDP-3-O-acyl-N-acetylglucosamine deacetylase.